We begin with the raw amino-acid sequence, 221 residues long: Tetraspanin-2 (221 aa).

Over 1-13 (MGRFRGGLRCIKY) the chain is Cytoplasmic. A helical membrane pass occupies residues 14–34 (LLLGFNLLFWLAGSAVIAFGL). Residues 35–54 (WFRFGGAIKELSSEDKSPEY) lie on the Extracellular side of the membrane. A helical transmembrane segment spans residues 55-75 (FYVGLYVLVGAGALMMAVGFF). Topologically, residues 76–90 (GCCGAMRESQCVLGS) are cytoplasmic. Residues 91–111 (FFTCLLVIFAAEVTTGVFAFI) traverse the membrane as a helical segment. At 112-188 (GKGVAIRHVQ…ETIISVKLQL (77 aa)) the chain is on the extracellular side. Asn-139 carries an N-linked (GlcNAc...) asparagine glycan. Residues 189–209 (IGIVGIGIAGLTIFGMIFSMV) traverse the membrane as a helical segment. The Cytoplasmic segment spans residues 210–221 (LCCAIRNSRDVI).

The protein belongs to the tetraspanin (TM4SF) family.

The protein localises to the membrane. Its function is as follows. May play a role in signalling in oligodendrocytes in the early stages of their terminal differentiation into myelin-forming glia and may also function in stabilizing the mature sheath. This chain is Tetraspanin-2 (TSPAN2), found in Homo sapiens (Human).